A 274-amino-acid chain; its full sequence is 2,3,4,5-tetrahydropyridine-2,6-dicarboxylate N-succinyltransferase (274 aa).

Substrate contacts are provided by R104 and D141.

It belongs to the transferase hexapeptide repeat family. In terms of assembly, homotrimer.

The protein resides in the cytoplasm. The enzyme catalyses (S)-2,3,4,5-tetrahydrodipicolinate + succinyl-CoA + H2O = (S)-2-succinylamino-6-oxoheptanedioate + CoA. Its pathway is amino-acid biosynthesis; L-lysine biosynthesis via DAP pathway; LL-2,6-diaminopimelate from (S)-tetrahydrodipicolinate (succinylase route): step 1/3. The polypeptide is 2,3,4,5-tetrahydropyridine-2,6-dicarboxylate N-succinyltransferase (Edwardsiella ictaluri (strain 93-146)).